The chain runs to 118 residues: Large ribosomal subunit protein bL20 (118 aa).

Belongs to the bacterial ribosomal protein bL20 family.

In terms of biological role, binds directly to 23S ribosomal RNA and is necessary for the in vitro assembly process of the 50S ribosomal subunit. It is not involved in the protein synthesizing functions of that subunit. In Staphylococcus epidermidis (strain ATCC 35984 / DSM 28319 / BCRC 17069 / CCUG 31568 / BM 3577 / RP62A), this protein is Large ribosomal subunit protein bL20.